The primary structure comprises 229 residues: 5'-methylthioadenosine/S-adenosylhomocysteine nucleosidase (229 aa).

Catalysis depends on glutamate 12, which acts as the Proton acceptor. Residues glycine 78, isoleucine 152, and methionine 173–glutamate 174 each bind substrate. The Proton donor role is filled by aspartate 197.

Belongs to the PNP/UDP phosphorylase family. MtnN subfamily.

It carries out the reaction S-adenosyl-L-homocysteine + H2O = S-(5-deoxy-D-ribos-5-yl)-L-homocysteine + adenine. It catalyses the reaction S-methyl-5'-thioadenosine + H2O = 5-(methylsulfanyl)-D-ribose + adenine. The catalysed reaction is 5'-deoxyadenosine + H2O = 5-deoxy-D-ribose + adenine. It functions in the pathway amino-acid biosynthesis; L-methionine biosynthesis via salvage pathway; S-methyl-5-thio-alpha-D-ribose 1-phosphate from S-methyl-5'-thioadenosine (hydrolase route): step 1/2. Its function is as follows. Catalyzes the irreversible cleavage of the glycosidic bond in both 5'-methylthioadenosine (MTA) and S-adenosylhomocysteine (SAH/AdoHcy) to adenine and the corresponding thioribose, 5'-methylthioribose and S-ribosylhomocysteine, respectively. Also cleaves 5'-deoxyadenosine, a toxic by-product of radical S-adenosylmethionine (SAM) enzymes, into 5-deoxyribose and adenine. The chain is 5'-methylthioadenosine/S-adenosylhomocysteine nucleosidase from Histophilus somni (strain 2336) (Haemophilus somnus).